A 374-amino-acid chain; its full sequence is uncharacterized protein (374 aa).

An N-terminal signal peptide occupies residues 1–23 (MDSKWFFIVLISFLLVLPSIVTP). The disordered stretch occupies residues 66 to 374 (SSSSSSSSSS…SSSSSSSGEN (309 aa)).

It localises to the secreted. This is an uncharacterized protein from Dictyostelium discoideum (Social amoeba).